A 1362-amino-acid polypeptide reads, in one-letter code: MNSSAPSPGPSSRLYRSINSRDDLSQQRYVLRPPDDIHPLVDPARIGDSVYPDFYPWKRSTDEEDARMVDNLQKGYAEPPSVPHESQSAKKSIASLLRIKSNMTALSCFIITAMHIRVDTCRITTPGTFKPPPRVTLTDHKREAWLKDLANPAVPLRKLSRTIPHGIRNKVLLDQCCAKRIAPSRAVWFARCVGANELRGLKRKGHHQMGNMSEAIWLQEWTECVVDVLQRSSVAFLRAEGEPQARQTAKQNFAYMWVVGLLSDDNTKDTKAGSGVAPGTGASTTSKLSSVEKLPVAILIIRTFWKPLLTFPNLAKKLAQNLLAELSKLEADAHSDKPFYQPTIKALSTLVNALFDAQPDAFVMPSKWVQLGSTFEAIVSDSESTRVRNEALVISDTPKTRRTRNKQAVIISILDAARAPFDKTLFNQIVDTRADFGTIIQTILAWAVSDSRVSVERVFIASHLVSQLSEGVDGDAVPSHIVQFLLSVKSHLDVRIDDLYALVTELCVLDIFQPQDYVRSLISSGVLYISRLSEWANVQLDILGNLPLVAVPSSCQVQVRYMVRKVAKYASYNENELLERTNNALRVLLPGVFDSQAEDVDMSSSSSSLSDSTNIPYSEFTQNTRIVVAENLYTSLCAAVERGYVPTTQEFAQYQLILENLHAWRLMCASIQLIVPKCTQSHLLYFLASATRYQWQAFACIADMPALVKVFMHQYRGLRKVRVSRELWDLVQFSAQQLPELKPELETLLKNSSSPQLSPISEVTPQTDSEATKDVNLPQALNDLLLHSSDVRTSCKMLANYKDDSQFSNQLMTWLRDQEVSLQLLQTLVFLVVYECTCIEKVGDLFLQIHNLRDMSGGSRLLLSLIARDLTQEYSLSTTEAFSLQFQRKLFADQHPRIYLRLVAQYLFEREVFQDPQWLDDVDTFCKEVAVHHPALFSQLIVDPVIEPDNAVAASSLQQLLNHLLKLDLGTGTSLADDLQQLITHVTPFNMFLAQTQLRLLFAHRGRISKDPVAMDTSPELTINSTTPSTDTTDEDVSVLFRVLSDPGLLKLPPFFGDLFSELPGELKGRILARAETTFLTSPNFPRVGEDNIVSLLIELADSLADSVTEDVCKTQTFALSSGLQRLVEASVREPHPPGLAEGISMFLKIAMIHEKSLMASEDAEVTMLRNHVVEGLQALLDSPFVATTPDLKATLQDTWTALKSELSEVAEPANSAPSKAGPTRDLLLYSTANDAFSEVTVRSFDLLEESNPTMGVNDAALNLALFNATIEKRIPIAWNNGHKRQLVDGGRGGRKTARGTDSSLVPTILEGIPRCMDEYSNHWELFFCFYLYTMRASEVHDLRANRASSFERRASSVELLA.

The segment at 31–51 (LRPPDDIHPLVDPARIGDSVY) is disordered.

This sequence belongs to the Mediator complex subunit 12 family. In terms of assembly, component of the SRB8-11 complex, which itself associates with the Mediator complex.

The protein resides in the nucleus. Component of the SRB8-11 complex. The SRB8-11 complex is a regulatory module of the Mediator complex which is itself involved in regulation of basal and activated RNA polymerase II-dependent transcription. The SRB8-11 complex may be involved in the transcriptional repression of a subset of genes regulated by Mediator. It may inhibit the association of the Mediator complex with RNA polymerase II to form the holoenzyme complex. This Yarrowia lipolytica (strain CLIB 122 / E 150) (Yeast) protein is Mediator of RNA polymerase II transcription subunit 12 (SRB8).